The sequence spans 279 residues: ATP synthase gamma chain (279 aa).

This sequence belongs to the ATPase gamma chain family. In terms of assembly, F-type ATPases have 2 components, CF(1) - the catalytic core - and CF(0) - the membrane proton channel. CF(1) has five subunits: alpha(3), beta(3), gamma(1), delta(1), epsilon(1). CF(0) has three main subunits: a, b and c.

It is found in the cell membrane. Its function is as follows. Produces ATP from ADP in the presence of a proton gradient across the membrane. The gamma chain is believed to be important in regulating ATPase activity and the flow of protons through the CF(0) complex. The polypeptide is ATP synthase gamma chain (Mycoplasmopsis pulmonis (strain UAB CTIP) (Mycoplasma pulmonis)).